The primary structure comprises 916 residues: MTQPTLKIGLWNARGLTRGSEELRIFLSDHDIDVMLTTETHMRVGQRIYLPGYLMYHAHHPSGNSRGGSAVIIKSRLCHSPLTPISTNDRQIARVHLQTSVGTVTVAAVYLPPAERWIVDDFKSMFAALGNKFIAGGDYNAKHAWWGNPRSCPRGKMLQEVIAHGQYQVLATGEPTFYSYNPLLTPSALDFFITCGYGMGRLDVQTLQELSSDHLPILAVLHATPLKKPQRVRLLAHNADINIFKTHLEQLSEVNMQILEAVDIDNATSLFMSKLSEAAQLAAPRNRHEVEAFRPLQLPSSILALLRLKRRVRKEYARTGDPRMQQIHSRLANCLHKALARRKQAQIDTFLDNLGADASTNYSLWRITKRFKAQPTPKSAIKNPSGGWCRTSLEKTEVFANNLEQRFTPYNYAPESLCRQVEEYLESPFQMSLPLSAVTLEEVKNLIAKLPLKKAPGEDLLDNRTIRLLPDQALQFLALIFNSVLDVGYFPKAWKSASIIMIHKTGKTPTDVDSYRPTSLLPSLGKIMERLILNRLLTCKDVTKAIPKFQFGFRLQHGTPEQLHRVVNFALEAMENKEYAVGAFLDIQQAFDRVWHPGLLYKAKRLFPPQLYLVVKSFLEERTFHVSVDGYKSSIKPIAAGVPQGSVLGPTLYSVFASDMPTHTPVTEVDEEDVLIATYADDTAVLTKSKSILAATSGLQEYLDAFQQWAENWNVRINAEKCANVTFANRTGSCPGVSLNGRLIRHHQAYKYLGITLDRKLTFSRHITNIQQAFRTKVARMSWLIAPRNKLSLGCKVNIYKSILAPCLFYGLQVYGIAAKSHLNKIRILQAKTLRRISGAPWYMRTRDIERDLKVPKLGDKLQNIAQKYMERLNVHPNSLARKLGTAAVVNADPRTRVKRRLKRHHPHDLPNLVLT.

Residues 483–757 (SVLDVGYFPK…QAYKYLGITL (275 aa)) enclose the Reverse transcriptase domain.

Requires Mg(2+) as cofactor. The cofactor is Mn(2+).

The catalysed reaction is DNA(n) + a 2'-deoxyribonucleoside 5'-triphosphate = DNA(n+1) + diphosphate. Its activity is regulated as follows. Inactivated by sulphydryl reagent. This chain is RNA-directed DNA polymerase from mobile element jockey (pol), found in Drosophila melanogaster (Fruit fly).